A 1157-amino-acid polypeptide reads, in one-letter code: Endo-1,4-beta-xylanase A (1157 aa).

A signal peptide spans 1 to 33; sequence MMKNNVDRIVSIVTALIMIFGASLFSPPIRVFA. CBM-cenC domains lie at 38–189 and 195–343; these read INLV…VTTQ and GNVI…VIGE. A GH10 domain is found at 352–675; that stretch reads QNDIPDLYSV…KPAFWAVVDP (324 aa). Glu495 serves as the catalytic Proton donor. Residue Asp537 is part of the active site. Glu600 serves as the catalytic Nucleophile. SLH domains follow at residues 1051–1114 and 1115–1157; these read KKGV…YSGE and FSDV…EMTQ.

It belongs to the glycosyl hydrolase 10 (cellulase F) family.

The catalysed reaction is Endohydrolysis of (1-&gt;4)-beta-D-xylosidic linkages in xylans.. Its pathway is glycan degradation; xylan degradation. Endo-acting enzyme that randomly cleaves the internal xylosidic linkages of the xylan backbone, yielding xylooligosaccharides of various lengths which are further hydrolyzed to xylose molecules by beta-xylosidase (EC 3.2.1.37). Requires at least three xylose residues for catalytic activity. Does not have activity against xylobiose. The chain is Endo-1,4-beta-xylanase A (xynA) from Thermoanaerobacterium saccharolyticum.